A 664-amino-acid polypeptide reads, in one-letter code: MATTGKSATLEDARHGTGSPKMKGRENAKDTLCRNVTIYGRCRYEDKGCAFNHDPHKVNSGYQSDSNKKRLNVDSPSFTPSILSSNGSSPTSQSATMKKMATISPKAASAAPFQPRSISSRSNSSTPTTRPGTMTPDWSVAEVQEFVPQGFDTAHIGSLQGNGTAGVPSTSAFDPFVTAPNPLSAANAVGPVQANPFSHDTAAALNGAAFFANQSGFQQPVQYHMYAPIGPHSQNTLGYQRNVHDLFLPNDLREEMQKKAAATLQTLPNTQLPAQVDYFHSLVPLDLNHQKNATIFGFPSWVYKAQSSKDGNFYALRRLEGFRLTNEKAIRSVQAWKRVCNGSVVTVHDAFTSRSFQDSSLIFVTDYHPLSKTLAEQHLGAGNRFQGRHNTHIPEQVLWGYMTQIANALKAIHASQLAARIIDPSKILLTGRNRIRLNACAIMDVVQFDTQRSLAELQRQDLVNFGQLIVTLGANQPNVMHNPTKAMEHFTRAYTAQLKNSVFWLLNGLQKDQERNIDIFITGISSTLMSTFDSALHLDDQLTSDLSRELENGRLVRLMTKLNFVNERPEYEHDRQWSENGERYFLKIFRDYVFHQVDAQGDPVVDLGHVLMCLNKLDAGTDEKITLISRDEQSCFVVSYKELKKALESSFQALLKPSASRRLH.

2 disordered regions span residues 1–27 and 54–134; these read MATTGKSATLEDARHGTGSPKMKGREN and DPHK…PGTM. The C3H1-type zinc finger occupies 27 to 56; sequence NAKDTLCRNVTIYGRCRYEDKGCAFNHDPH. Over residues 74 to 96 the composition is skewed to polar residues; sequence DSPSFTPSILSSNGSSPTSQSAT. A compositionally biased stretch (low complexity) spans 115 to 131; it reads PRSISSRSNSSTPTTRP. Residues 265–525 are pseudokinase domain; it reads QTLPNTQLPA…NIDIFITGIS (261 aa). ATP is bound by residues arginine 317, 366–373, and 425–426; these read DYHPLSKT and SK. A coiled-coil region spans residues 526-564; that stretch reads STLMSTFDSALHLDDQLTSDLSRELENGRLVRLMTKLNF. A knob domain region spans residues 565–664; the sequence is VNERPEYEHD…LKPSASRRLH (100 aa).

The protein belongs to the protein kinase superfamily. PAN3 family. Homodimer. Forms a heterotrimer with a catalytic subunit pan2 to form the poly(A)-nuclease (PAN) deadenylation complex. Interacts (via PAM-2 motif) with poly(A)-binding protein pab1 (via PABC domain), conferring substrate specificity of the enzyme complex.

It localises to the cytoplasm. In terms of biological role, regulatory subunit of the poly(A)-nuclease (PAN) deadenylation complex, one of two cytoplasmic mRNA deadenylases involved in mRNA turnover. PAN specifically shortens poly(A) tails of RNA and the activity is stimulated by poly(A)-binding protein pab1. PAN deadenylation is followed by rapid degradation of the shortened mRNA tails by the CCR4-NOT complex. Deadenylated mRNAs are then degraded by two alternative mechanisms, namely exosome-mediated 3'-5' exonucleolytic degradation, or deadenylation-dependent mRNA decaping and subsequent 5'-3' exonucleolytic degradation by xrn1. May also be involved in post-transcriptional maturation of mRNA poly(A) tails. pan3 acts as a positive regulator for PAN activity, recruiting the catalytic subunit pan2 to mRNA via its interaction with RNA and with pab1. This chain is PAN2-PAN3 deadenylation complex subunit PAN3, found in Aspergillus niger (strain ATCC MYA-4892 / CBS 513.88 / FGSC A1513).